The chain runs to 235 residues: Pyridoxine 5'-phosphate synthase (235 aa).

3-amino-2-oxopropyl phosphate is bound at residue N6. A 1-deoxy-D-xylulose 5-phosphate-binding site is contributed by 8 to 9 (DH). R17 contributes to the 3-amino-2-oxopropyl phosphate binding site. H42 functions as the Proton acceptor in the catalytic mechanism. 1-deoxy-D-xylulose 5-phosphate is bound by residues R44 and H49. The active-site Proton acceptor is the E69. T99 provides a ligand contact to 1-deoxy-D-xylulose 5-phosphate. H188 (proton donor) is an active-site residue. 3-amino-2-oxopropyl phosphate contacts are provided by residues G189 and 210–211 (GH).

Belongs to the PNP synthase family. As to quaternary structure, homooctamer; tetramer of dimers.

It localises to the cytoplasm. It carries out the reaction 3-amino-2-oxopropyl phosphate + 1-deoxy-D-xylulose 5-phosphate = pyridoxine 5'-phosphate + phosphate + 2 H2O + H(+). It participates in cofactor biosynthesis; pyridoxine 5'-phosphate biosynthesis; pyridoxine 5'-phosphate from D-erythrose 4-phosphate: step 5/5. Catalyzes the complicated ring closure reaction between the two acyclic compounds 1-deoxy-D-xylulose-5-phosphate (DXP) and 3-amino-2-oxopropyl phosphate (1-amino-acetone-3-phosphate or AAP) to form pyridoxine 5'-phosphate (PNP) and inorganic phosphate. The polypeptide is Pyridoxine 5'-phosphate synthase (Wolbachia sp. subsp. Drosophila simulans (strain wRi)).